Reading from the N-terminus, the 163-residue chain is DNA endonuclease I-CreI (163 aa).

Gly-19 and Asp-20 together coordinate Mg(2+). Interaction with DNA regions lie at residues 26–38 (QIKP…FKHQ), 44–47 (QVTQ), 68–70 (RDR), and 138–143 (SKTRKT).

Belongs to the LAGLIDADG endonuclease family. As to quaternary structure, homodimer. Mg(2+) serves as cofactor. Requires Mn(2+) as cofactor. Co(2+) is required as a cofactor. The cofactor is Ni(2+). It depends on Zn(2+) as a cofactor.

It is found in the plastid. Its subcellular location is the chloroplast. In terms of biological role, endonuclease involved in group I intron homing. Recognizes and cleaves a 19-24 bp palindromic DNA site. This is DNA endonuclease I-CreI from Chlamydomonas reinhardtii (Chlamydomonas smithii).